Consider the following 361-residue polypeptide: tRNA-specific 2-thiouridylase MnmA (361 aa).

ATP-binding positions include 11–18 and Met-37; that span reads GMSGGVDS. Residues 97 to 99 form an interaction with target base in tRNA region; that stretch reads NPD. Cys-102 functions as the Nucleophile in the catalytic mechanism. The cysteines at positions 102 and 199 are disulfide-linked. Gly-126 contributes to the ATP binding site. Residues 149–151 are interaction with tRNA; sequence KDQ. Cys-199 (cysteine persulfide intermediate) is an active-site residue. The interval 311 to 312 is interaction with tRNA; the sequence is RY.

Belongs to the MnmA/TRMU family.

The protein resides in the cytoplasm. It catalyses the reaction S-sulfanyl-L-cysteinyl-[protein] + uridine(34) in tRNA + AH2 + ATP = 2-thiouridine(34) in tRNA + L-cysteinyl-[protein] + A + AMP + diphosphate + H(+). Its function is as follows. Catalyzes the 2-thiolation of uridine at the wobble position (U34) of tRNA, leading to the formation of s(2)U34. The chain is tRNA-specific 2-thiouridylase MnmA from Cupriavidus necator (strain ATCC 17699 / DSM 428 / KCTC 22496 / NCIMB 10442 / H16 / Stanier 337) (Ralstonia eutropha).